The following is a 340-amino-acid chain: Ketol-acid reductoisomerase (NADP(+)) (340 aa).

Residues 1–183 (MAITVYYDKD…GGGRTGIIET (183 aa)) enclose the KARI N-terminal Rossmann domain. NADP(+)-binding positions include 26–29 (FGSQ), Arg49, Ser52, Ser54, and 84–87 (DEIQ). His109 is a catalytic residue. Residue Gly135 participates in NADP(+) binding. In terms of domain architecture, KARI C-terminal knotted spans 184–329 (TFKAETETDL…RNLRAMMPWI (146 aa)). Residues Asp192, Glu196, Glu228, and Glu232 each contribute to the Mg(2+) site. Position 253 (Ser253) interacts with substrate.

The protein belongs to the ketol-acid reductoisomerase family. Requires Mg(2+) as cofactor.

It carries out the reaction (2R)-2,3-dihydroxy-3-methylbutanoate + NADP(+) = (2S)-2-acetolactate + NADPH + H(+). The enzyme catalyses (2R,3R)-2,3-dihydroxy-3-methylpentanoate + NADP(+) = (S)-2-ethyl-2-hydroxy-3-oxobutanoate + NADPH + H(+). It functions in the pathway amino-acid biosynthesis; L-isoleucine biosynthesis; L-isoleucine from 2-oxobutanoate: step 2/4. Its pathway is amino-acid biosynthesis; L-valine biosynthesis; L-valine from pyruvate: step 2/4. Its function is as follows. Involved in the biosynthesis of branched-chain amino acids (BCAA). Catalyzes an alkyl-migration followed by a ketol-acid reduction of (S)-2-acetolactate (S2AL) to yield (R)-2,3-dihydroxy-isovalerate. In the isomerase reaction, S2AL is rearranged via a Mg-dependent methyl migration to produce 3-hydroxy-3-methyl-2-ketobutyrate (HMKB). In the reductase reaction, this 2-ketoacid undergoes a metal-dependent reduction by NADPH to yield (R)-2,3-dihydroxy-isovalerate. In Campylobacter jejuni subsp. jejuni serotype O:6 (strain 81116 / NCTC 11828), this protein is Ketol-acid reductoisomerase (NADP(+)).